The chain runs to 421 residues: Serine hydroxymethyltransferase (421 aa).

(6S)-5,6,7,8-tetrahydrofolate is bound by residues L123 and 127–129 (GHL). K232 carries the post-translational modification N6-(pyridoxal phosphate)lysine.

It belongs to the SHMT family. In terms of assembly, homodimer. Requires pyridoxal 5'-phosphate as cofactor.

The protein localises to the cytoplasm. It carries out the reaction (6R)-5,10-methylene-5,6,7,8-tetrahydrofolate + glycine + H2O = (6S)-5,6,7,8-tetrahydrofolate + L-serine. Its pathway is one-carbon metabolism; tetrahydrofolate interconversion. It participates in amino-acid biosynthesis; glycine biosynthesis; glycine from L-serine: step 1/1. Functionally, catalyzes the reversible interconversion of serine and glycine with tetrahydrofolate (THF) serving as the one-carbon carrier. This reaction serves as the major source of one-carbon groups required for the biosynthesis of purines, thymidylate, methionine, and other important biomolecules. Also exhibits THF-independent aldolase activity toward beta-hydroxyamino acids, producing glycine and aldehydes, via a retro-aldol mechanism. This Ehrlichia canis (strain Jake) protein is Serine hydroxymethyltransferase.